The primary structure comprises 145 residues: D-aminoacyl-tRNA deacylase (145 aa).

The Gly-cisPro motif, important for rejection of L-amino acids signature appears at 137-138 (GP).

Belongs to the DTD family. In terms of assembly, homodimer.

The protein resides in the cytoplasm. It carries out the reaction glycyl-tRNA(Ala) + H2O = tRNA(Ala) + glycine + H(+). The catalysed reaction is a D-aminoacyl-tRNA + H2O = a tRNA + a D-alpha-amino acid + H(+). Its function is as follows. An aminoacyl-tRNA editing enzyme that deacylates mischarged D-aminoacyl-tRNAs. Also deacylates mischarged glycyl-tRNA(Ala), protecting cells against glycine mischarging by AlaRS. Acts via tRNA-based rather than protein-based catalysis; rejects L-amino acids rather than detecting D-amino acids in the active site. By recycling D-aminoacyl-tRNA to D-amino acids and free tRNA molecules, this enzyme counteracts the toxicity associated with the formation of D-aminoacyl-tRNA entities in vivo and helps enforce protein L-homochirality. The polypeptide is D-aminoacyl-tRNA deacylase (Pseudomonas savastanoi pv. phaseolicola (strain 1448A / Race 6) (Pseudomonas syringae pv. phaseolicola (strain 1448A / Race 6))).